Reading from the N-terminus, the 961-residue chain is Vinculin (961 aa).

2 tandem repeats follow at residues 258 to 362 and 371 to 470. Residues 258–470 are 2 X repeats; the sequence is ELDNLTVLKK…LTQKLYELKA (213 aa). The disordered stretch occupies residues 720 to 778; the sequence is AIAPPQPPPLPTSLPPPIPELSALHLSNQNAERAPPRPPLPREGLAPVRPPPPETDDED. Pro residues predominate over residues 723–738; it reads PPQPPPLPTSLPPPIP. The residue at position 774 (Thr-774) is a Phosphothreonine.

It belongs to the vinculin/alpha-catenin family. In terms of assembly, exhibits self-association properties.

Its subcellular location is the cytoplasm. It is found in the cytoskeleton. It localises to the cell junction. The protein resides in the adherens junction. The protein localises to the cell membrane. Its function is as follows. Involved in cell adhesion. May be involved in the attachment of the actin-based microfilaments to the plasma membrane. In Drosophila melanogaster (Fruit fly), this protein is Vinculin (Vinc).